The primary structure comprises 577 residues: Cytochrome P450 714D1 (577 aa).

Topologically, residues 1 to 3 (MES) are lumenal. A helical; Signal-anchor for type III membrane protein membrane pass occupies residues 4 to 24 (FFVFFTAAALPVVVAAAVIAG). Residues 25–577 (LCITAAWLAR…STAPVHSSHN (553 aa)) are Cytoplasmic-facing. Positions 315–343 (REHGGKAAPPSPPERDFLGSIIENSGGQP) are disordered. Cys504 is a heme binding site.

It belongs to the cytochrome P450 family. Heme is required as a cofactor. As to expression, expressed in rapidly elongating or dividing tissues, including the shoot apical meristem, the intercalary meristem and elongating zones of internodes, and panicle but not in young seedlings, roots and leaves. During the heading stage, the highest expression is detected in the flowering spikelets, anthers, the divisional zone and the node of the uppermost internode.

The protein localises to the endoplasmic reticulum membrane. Catalyzes the 16alpha,17-epoxidation on non-13-hydroxylated gibberellins (GAs), including GA4, GA9, and GA12. No activity with GA1, GA20, GA53 or ent-kaurenoic acid. Reduces the biological activity of GAs. This Oryza sativa subsp. japonica (Rice) protein is Cytochrome P450 714D1 (CYP714D1).